Reading from the N-terminus, the 117-residue chain is Movement protein TGB2 (117 aa).

Topologically, residues Met1–Lys11 are cytoplasmic. Residues Thr12 to Ser32 traverse the membrane as a helical segment. Topologically, residues Asp33 to Asn78 are lumenal. A helical membrane pass occupies residues Thr79–Ser99. Residues Asn100–His117 are Cytoplasmic-facing.

It belongs to the Tymovirales TGBp2 protein family.

Its subcellular location is the host endoplasmic reticulum membrane. Its function is as follows. Plays a role in viral cell-to-cell propagation, by facilitating genome transport to neighboring plant cells through plasmosdesmata,. This Trifolium (WCMV) protein is Movement protein TGB2.